Here is a 1790-residue protein sequence, read N- to C-terminus: Vitellogenin (1790 aa).

Residues 1–19 (MWSTVALCLLVGLSYVSSS) form the signal peptide. Positions 23–799 (WKDNTEYVYS…SAESSFPKIM (777 aa)) constitute a Vitellogenin domain. Asparagine 219 and asparagine 297 each carry an N-linked (GlcNAc...) asparagine glycan. Acidic residues predominate over residues 342–353 (LMEDSSSEESSE). The interval 342 to 400 (LMEDSSSEESSEQEMTHRRFRRSANSLTKQWRESSEEWNQQQQQPRPQLTRAPHSPLLP) is disordered. The span at 378-389 (EWNQQQQQPRPQ) shows a compositional bias: low complexity. N-linked (GlcNAc...) asparagine glycosylation is found at asparagine 554, asparagine 573, asparagine 893, asparagine 1345, asparagine 1416, asparagine 1430, asparagine 1480, asparagine 1699, and asparagine 1735. One can recognise a VWFD domain in the interval 1466–1675 (PTCVIDQTTA…SYQVEKGQQW (210 aa)). The cysteines at positions 1468 and 1638 are disulfide-linked.

The protein localises to the secreted. In terms of biological role, precursor of the egg-yolk proteins that are sources of nutrients during embryonic development. This chain is Vitellogenin (VTG), found in Anthonomus grandis (Mexican cotton boll weevil).